Reading from the N-terminus, the 453-residue chain is MKDTETRPGRHRAPEPAHPEQPDTTGDTVVTVSGQDWDTVTETLGGAREERIVVNMGPQHPSTHGVLRLILEIEGETVVEARCGIGYLHTGIEKNLEYRTWMQGVTFVTRMDYLSPFYNETAYCLGVERLLGITEQIPERASIVRVLLMELNRISSHLVCLATGGMELGALTPMLFGFRERELILDVFETITGLRMNHAYIRPGGLAQDLPDDGVAKVRELLDLMPKRLRDMEHLLTQNPIFKARTQDIGYLDLTGCMALGITGPVLRSAGLPHDLRKSQPYCGYETYEFDVPTTTGCDCYGRYLIRVEEMKESLKIVEQCLDRLRPGPVMIEDKKLAWPADLKLGADGLGNSPAHIGRIMGSSMEGLIHHFKLVTEGIRVPAGQVYVAVESPRGELGVHMVSDGGTRPYRVHYRDPSFTNLQAVAAMCEGGMVADVIAAVASIDPVMGGVDR.

Residues 1-21 (MKDTETRPGRHRAPEPAHPEQ) show a composition bias toward basic and acidic residues. Residues 1–30 (MKDTETRPGRHRAPEPAHPEQPDTTGDTVV) are disordered.

This sequence belongs to the complex I 49 kDa subunit family. In terms of assembly, NDH-1 is composed of 14 different subunits. Subunits NuoB, C, D, E, F, and G constitute the peripheral sector of the complex.

Its subcellular location is the cell membrane. The enzyme catalyses a quinone + NADH + 5 H(+)(in) = a quinol + NAD(+) + 4 H(+)(out). In terms of biological role, NDH-1 shuttles electrons from NADH, via FMN and iron-sulfur (Fe-S) centers, to quinones in the respiratory chain. The immediate electron acceptor for the enzyme in this species is believed to be a menaquinone. Couples the redox reaction to proton translocation (for every two electrons transferred, four hydrogen ions are translocated across the cytoplasmic membrane), and thus conserves the redox energy in a proton gradient. The polypeptide is NADH-quinone oxidoreductase subunit D (Nocardia farcinica (strain IFM 10152)).